We begin with the raw amino-acid sequence, 314 residues long: DNA-directed RNA polymerase subunit alpha (314 aa).

The interval 1-227 (MLEIEKPKIE…DYLKLFVALT (227 aa)) is alpha N-terminal domain (alpha-NTD). Residues 244-314 (QDKILEMTIE…LGLSLRKSED (71 aa)) are alpha C-terminal domain (alpha-CTD).

Belongs to the RNA polymerase alpha chain family. As to quaternary structure, homodimer. The RNAP catalytic core consists of 2 alpha, 1 beta, 1 beta' and 1 omega subunit. When a sigma factor is associated with the core the holoenzyme is formed, which can initiate transcription.

The enzyme catalyses RNA(n) + a ribonucleoside 5'-triphosphate = RNA(n+1) + diphosphate. Its function is as follows. DNA-dependent RNA polymerase catalyzes the transcription of DNA into RNA using the four ribonucleoside triphosphates as substrates. The chain is DNA-directed RNA polymerase subunit alpha from Heliobacterium modesticaldum (strain ATCC 51547 / Ice1).